A 73-amino-acid chain; its full sequence is Toxin Td12 (73 aa).

The first 7 residues, Ile1–Cys7, serve as a signal peptide directing secretion. The LCN-type CS-alpha/beta domain occupies Lys8–Gly70. 4 disulfide bridges follow: Cys18–Cys69, Cys22–Cys44, Cys30–Cys50, and Cys34–Cys52. An Arginine amide modification is found at Arg71.

This sequence belongs to the long (4 C-C) scorpion toxin superfamily. Sodium channel inhibitor family. Beta subfamily. Expressed by the venom gland.

Its subcellular location is the secreted. Beta toxins bind voltage-independently at site-4 of sodium channels (Nav) and shift the voltage of activation toward more negative potentials thereby affecting sodium channel activation and promoting spontaneous and repetitive firing. The polypeptide is Toxin Td12 (Tityus discrepans (Venezuelan scorpion)).